Consider the following 139-residue polypeptide: Translation initiation factor 2 subunit beta (139 aa).

This sequence belongs to the eIF-2-beta/eIF-5 family. Heterotrimer composed of an alpha, a beta and a gamma chain.

Functionally, eIF-2 functions in the early steps of protein synthesis by forming a ternary complex with GTP and initiator tRNA. This chain is Translation initiation factor 2 subunit beta, found in Nanoarchaeum equitans (strain Kin4-M).